We begin with the raw amino-acid sequence, 373 residues long: MSQNYYQILGVSKTASQADLKKAYLKLAKQYHPDTTDAKDAEKKFKAINAAYDVLKDEQKRAAYDRLGHDAFQNQQSRGGGGNHGGFHPDINDIFGDFFSDFMGGSRRSSRPTSAKVRGSDLKYNLTINLEEAFHGIEKNINFSSAVKCNTCHGSGSEKGETVTTCDACSGVGATRMQQGFFTIEQACHKCQGNGHIIKNPCKKCHGMGRYHKQRNLSVNIPAGVENGTRIRHTGEGEAGIRGGNSGDLYVDITIKPHDIYKVDGANLHCKLPISFVNAALGGEIEVPVIEGGKVSLTIPAGTQNGDQLRLRSKGMSKMRSTIRGDMLTHIHVEVPKNLSKRQRELLEEFKKESINEKENDGSFFNKMKSLWS.

Residues 4 to 68 (NYYQILGVSK…QKRAAYDRLG (65 aa)) enclose the J domain. The CR-type zinc-finger motif lies at 136 to 214 (GIEKNINFSS…CHGMGRYHKQ (79 aa)). Residues Cys149, Cys152, Cys166, Cys169, Cys188, Cys191, Cys202, and Cys205 each contribute to the Zn(2+) site. CXXCXGXG motif repeat units follow at residues 149 to 156 (CNTCHGSG), 166 to 173 (CDACSGVG), 188 to 195 (CHKCQGNG), and 202 to 209 (CKKCHGMG).

The protein belongs to the DnaJ family. As to quaternary structure, homodimer. Zn(2+) is required as a cofactor.

It localises to the cytoplasm. Functionally, participates actively in the response to hyperosmotic and heat shock by preventing the aggregation of stress-denatured proteins and by disaggregating proteins, also in an autonomous, DnaK-independent fashion. Unfolded proteins bind initially to DnaJ; upon interaction with the DnaJ-bound protein, DnaK hydrolyzes its bound ATP, resulting in the formation of a stable complex. GrpE releases ADP from DnaK; ATP binding to DnaK triggers the release of the substrate protein, thus completing the reaction cycle. Several rounds of ATP-dependent interactions between DnaJ, DnaK and GrpE are required for fully efficient folding. Also involved, together with DnaK and GrpE, in the DNA replication of plasmids through activation of initiation proteins. This Rickettsia rickettsii (strain Sheila Smith) protein is Chaperone protein DnaJ.